A 461-amino-acid chain; its full sequence is MLSVGATTTATRLTGWGRTAPSVANVLRTPDAEMIVKAVARVAESGGGRGAIARGLGRSYGDNAQNGGGLVIDMTPLNTIHSIDADTKLVDIDAGVNLDQLMKAALPFGLWVPVLPGTRQVTVGGAIACDIHGKNHHSAGSFGNHVRSMDLLTADGEIRHLTPTGEDAELFWATVGGNGLTGIIMRATIEMTPTSTAYFIADGDVTASLDETIALHSDGSEARYTYSSAWFDAISAPPKLGRAAVSRGRLATVEQLPAKLRSEPLKFDAPQLLTLPDVFPNGLANKYTFGPIGELWYRKSGTYRGKVQNLTQFYHPLDMFGEWNRAYGPAGFLQYQFVIPTEAVDEFKKIIGVIQASGHYSFLNVFKLFGPRNQAPLSFPIPGWNICVDFPIKDGLGKFVSELDRRVLEFGGRLYTAKDSRTTAETFHAMYPRVDEWISVRRKVDPLRVFASDMARRLELL.

One can recognise an FAD-binding PCMH-type domain in the interval 19-194 (TAPSVANVLR…MRATIEMTPT (176 aa)). FAD is bound by residues 53–63 (ARGLGRSYGDN), Gly117, 122–125 (TVGG), 129–132 (CDIH), Ile184, and Tyr415.

The protein belongs to the DprE1 family. As to quaternary structure, monomer. Although forming apparent dimer in crystals, DprE1 does not dimerize appreciably in solution. Interacts with DprE2 to form an epimerase complex.

The protein localises to the periplasm. The catalysed reaction is trans,octa-cis-decaprenylphospho-beta-D-ribofuranose + FAD + H(+) = trans,octa-cis-decaprenylphospho-beta-D-erythro-pentofuranosid-2-ulose + FADH2. The protein operates within cell wall biogenesis; cell wall polysaccharide biosynthesis. With respect to regulation, is inhibited by 8-nitro-benzothiazinones (BTZs) such as BTZ043 and PBTZ169; BTZs are a new class of antimycobacterial agents that kill M.tuberculosis in vitro, ex vivo, and in mouse models of tuberculosis. Is also inhibited by dinitrobenzamide derivatives (DNBs), which thus block formation of both cell-wall lipoarabinomannan and arabinogalactan via inhibition of decaprenyl-phospho-arabinose (DPA) synthesis; DNBs show high activity against intracellular growth of M.tuberculosis inside macrophages, including extensively drug resistant (XDR) strains. BTZs and DNBs are suicide inhibitors that act via covalent modification of DprE1; the essential nitro group of these compounds is reduced by DprE1 to a nitroso group, which then specifically reacts with Cys-387 of DprE1 to form an irreversible semimercaptal adduct. Many other compounds with diverse scaffolds were found to act as either covalent (e.g. nitroquinoxalines, nitroimidazoles) or non-covalent (e.g. the benzothiazole derivative TCA1, the 2-carboxyquinoxaline Ty38C, 8-pyrrole-benzothiazinones, 1,4-azaindoles, pyrazolopyridones, 4-aminoquinolone piperidine amides) DprE1 inhibitors. Component of the DprE1-DprE2 complex that catalyzes the 2-step epimerization of decaprenyl-phospho-ribose (DPR) to decaprenyl-phospho-arabinose (DPA), a key precursor that serves as the arabinose donor required for the synthesis of cell-wall arabinans. DprE1 catalyzes the first step of epimerization, namely FAD-dependent oxidation of the C2' hydroxyl of DPR to yield the keto intermediate decaprenyl-phospho-2'-keto-D-arabinose (DPX). The intermediate DPX is then transferred to DprE2 subunit of the epimerase complex, most probably through a 'substrate channel' at the interface of DprE1-DprE2 complex. Can also use farnesyl-phosphoryl-beta-D-ribofuranose (FPR) as substrate in vitro. Its function is as follows. DprE1 is a highly vulnerable and fully validated tuberculosis drug target. The protein is Decaprenylphosphoryl-beta-D-ribose oxidase of Mycobacterium tuberculosis (strain CDC 1551 / Oshkosh).